Consider the following 177-residue polypeptide: Ribosome maturation factor RimM (177 aa).

Positions 104–176 (DGEYYFFEIL…KIIVNMPEWL (73 aa)) constitute a PRC barrel domain.

Belongs to the RimM family. Binds ribosomal protein uS19.

The protein resides in the cytoplasm. An accessory protein needed during the final step in the assembly of 30S ribosomal subunit, possibly for assembly of the head region. Essential for efficient processing of 16S rRNA. May be needed both before and after RbfA during the maturation of 16S rRNA. It has affinity for free ribosomal 30S subunits but not for 70S ribosomes. This Fervidobacterium nodosum (strain ATCC 35602 / DSM 5306 / Rt17-B1) protein is Ribosome maturation factor RimM.